Consider the following 681-residue polypeptide: Pescadillo homolog (681 aa).

The 120-residue stretch at 350 to 469 (TAGALFAPFT…KLLRPDLYAP (120 aa)) folds into the BRCT domain. The disordered stretch occupies residues 489–681 (DPRASLAEQE…RRKLEKGAEK (193 aa)). Residues 491-527 (RASLAEQEEEGEAEIAAEEEEEDSDEEMEEATDGKKV) are a coiled coil. Acidic residues predominate over residues 496-521 (EQEEEGEAEIAAEEEEEDSDEEMEEA). Residues 522-533 (TDGKKVDAKAED) are compositionally biased toward basic and acidic residues. Acidic residues-rich tracts occupy residues 534 to 546 (SAEEENEDEDDSV) and 554 to 586 (GTDDDEDESEEEMEDEFGGFEEEAASESEDEEE). The stretch at 574–681 (EEEAASESED…RRKLEKGAEK (108 aa)) forms a coiled coil. Positions 587–597 (SARTQHQKELE) are enriched in basic and acidic residues. Residues 617 to 629 (KKSSQAKKVASKK) show a composition bias toward basic residues. Positions 630–640 (RKEEEELERQK) are enriched in basic and acidic residues.

It belongs to the pescadillo family. As to quaternary structure, component of the NOP7 complex, composed of erb1, nop7 and ytm1. The complex is held together by erb1, which interacts with nop7 via its N-terminal domain and with ytm1 via a high-affinity interaction between the seven-bladed beta-propeller domains of the 2 proteins. The NOP7 complex associates with the 66S pre-ribosome.

It is found in the nucleus. The protein resides in the nucleolus. The protein localises to the nucleoplasm. In terms of biological role, component of the NOP7 complex, which is required for maturation of the 25S and 5.8S ribosomal RNAs and formation of the 60S ribosome. In Aspergillus oryzae (strain ATCC 42149 / RIB 40) (Yellow koji mold), this protein is Pescadillo homolog (nop7).